Here is a 122-residue protein sequence, read N- to C-terminus: Probable transcription factor PqrA (122 aa).

The region spanning 7 to 107 (NDILKWLETQ…NTTPAKFREN (101 aa)) is the HTH araC/xylS-type domain. DNA-binding regions (H-T-H motif) lie at residues 26–47 (DTIA…KDFK) and 74–97 (ILDI…KKHF).

Its function is as follows. Upon expression in E.coli strain KY2563 confers resistance to antibiotics ofloxacin, ciprofloxacin, tetracycline, chloramphenicol, and ceftazidime (increases minimal inhibitory concentration by 8-32 times); also decreases expression of OmpF. The chain is Probable transcription factor PqrA from Proteus vulgaris.